Here is a 610-residue protein sequence, read N- to C-terminus: Dihydroxy-acid dehydratase (610 aa).

Aspartate 81 lines the Mg(2+) pocket. Cysteine 122 lines the [2Fe-2S] cluster pocket. Mg(2+) is bound by residues aspartate 123 and lysine 124. Lysine 124 carries the N6-carboxylysine modification. Residue cysteine 193 participates in [2Fe-2S] cluster binding. Mg(2+) is bound at residue glutamate 489. The active-site Proton acceptor is the serine 515.

It belongs to the IlvD/Edd family. In terms of assembly, homodimer. It depends on [2Fe-2S] cluster as a cofactor. Mg(2+) is required as a cofactor.

It catalyses the reaction (2R)-2,3-dihydroxy-3-methylbutanoate = 3-methyl-2-oxobutanoate + H2O. The enzyme catalyses (2R,3R)-2,3-dihydroxy-3-methylpentanoate = (S)-3-methyl-2-oxopentanoate + H2O. It participates in amino-acid biosynthesis; L-isoleucine biosynthesis; L-isoleucine from 2-oxobutanoate: step 3/4. It functions in the pathway amino-acid biosynthesis; L-valine biosynthesis; L-valine from pyruvate: step 3/4. Its function is as follows. Functions in the biosynthesis of branched-chain amino acids. Catalyzes the dehydration of (2R,3R)-2,3-dihydroxy-3-methylpentanoate (2,3-dihydroxy-3-methylvalerate) into 2-oxo-3-methylpentanoate (2-oxo-3-methylvalerate) and of (2R)-2,3-dihydroxy-3-methylbutanoate (2,3-dihydroxyisovalerate) into 2-oxo-3-methylbutanoate (2-oxoisovalerate), the penultimate precursor to L-isoleucine and L-valine, respectively. This chain is Dihydroxy-acid dehydratase, found in Xylella fastidiosa (strain 9a5c).